A 521-amino-acid chain; its full sequence is Cholesterol side-chain cleavage enzyme, mitochondrial (521 aa).

The transit peptide at 1–39 (MLAKGLPPRSVLVKGCQTFLSAPREGLGRLRVPTGEGAG) directs the protein to the mitochondrion. Cys-462 serves as a coordination point for heme.

The protein belongs to the cytochrome P450 family. Interacts with FDX1/adrenodoxin. It depends on heme as a cofactor.

Its subcellular location is the mitochondrion inner membrane. The enzyme catalyses 6 reduced [adrenodoxin] + cholesterol + 3 O2 + 6 H(+) = 4-methylpentanal + pregnenolone + 6 oxidized [adrenodoxin] + 4 H2O. The catalysed reaction is 2 reduced [adrenodoxin] + cholesterol + O2 + 2 H(+) = (22R)-hydroxycholesterol + 2 oxidized [adrenodoxin] + H2O. It catalyses the reaction (22R)-hydroxycholesterol + 2 reduced [adrenodoxin] + O2 + 2 H(+) = (20R,22R)-20,22-dihydroxycholesterol + 2 oxidized [adrenodoxin] + H2O. It carries out the reaction (20R,22R)-20,22-dihydroxycholesterol + 2 reduced [adrenodoxin] + O2 + 2 H(+) = 4-methylpentanal + pregnenolone + 2 oxidized [adrenodoxin] + 2 H2O. It functions in the pathway lipid metabolism; C21-steroid hormone metabolism. Its pathway is steroid metabolism; cholesterol metabolism. In terms of biological role, a cytochrome P450 monooxygenase that catalyzes the side-chain hydroxylation and cleavage of cholesterol to pregnenolone, the precursor of most steroid hormones. Catalyzes three sequential oxidation reactions of cholesterol, namely the hydroxylation at C22 followed with the hydroxylation at C20 to yield 20R,22R-hydroxycholesterol that is further cleaved between C20 and C22 to yield the C21-steroid pregnenolone and 4-methylpentanal. Mechanistically, uses molecular oxygen inserting one oxygen atom into a substrate and reducing the second into a water molecule. Two electrons are provided by NADPH via a two-protein mitochondrial transfer system comprising flavoprotein FDXR (adrenodoxin/ferredoxin reductase) and nonheme iron-sulfur protein FDX1 or FDX2 (adrenodoxin/ferredoxin). The chain is Cholesterol side-chain cleavage enzyme, mitochondrial from Homo sapiens (Human).